The sequence spans 350 residues: Ribosomal RNA small subunit methyltransferase C (350 aa).

This sequence belongs to the methyltransferase superfamily. RsmC family. Monomer.

It localises to the cytoplasm. It carries out the reaction guanosine(1207) in 16S rRNA + S-adenosyl-L-methionine = N(2)-methylguanosine(1207) in 16S rRNA + S-adenosyl-L-homocysteine + H(+). Functionally, specifically methylates the guanine in position 1207 of 16S rRNA in the 30S particle. This Sodalis glossinidius (strain morsitans) protein is Ribosomal RNA small subunit methyltransferase C.